A 400-amino-acid chain; its full sequence is EARP-interacting protein homolog (400 aa).

The disordered stretch occupies residues 95 to 114 (NNNSNNTNNNDNTNNNTNNN). Over residues 96–114 (NNSNNTNNNDNTNNNTNNN) the composition is skewed to low complexity. 3 WD repeats span residues 138–178 (GHTG…NEPT), 227–267 (AHSE…DPVK), and 271–311 (GHNH…SAFN). Low complexity predominate over residues 314 to 333 (NNISNSNEQQHSQQPNEQQP). Residues 314–348 (NNISNSNEQQHSQQPNEQQPQQPPQPVKQKKNKRN) are disordered. One copy of the WD 4 repeat lies at 358–397 (EHEDSVYNISWSSSNFLFASLSYDGRFVVNNVPKEYSDIL).

It belongs to the WD repeat EIPR1 family.

This is EARP-interacting protein homolog from Dictyostelium discoideum (Social amoeba).